Here is a 439-residue protein sequence, read N- to C-terminus: Glycosyl hydrolase DigH (439 aa).

The first 27 residues, 1–27 (MDICSRNKKLTIRRPAILVALALLLCS), serve as a signal peptide directing secretion. A lipid anchor (N-palmitoyl cysteine) is attached at cysteine 28. The S-diacylglycerol cysteine moiety is linked to residue cysteine 28. A disordered region spans residues 34 to 54 (ESMVTPPAGSKPPATTQQSSQ).

It belongs to the glycosyl hydrolase-like 10 (GHL10) family.

The protein localises to the cell outer membrane. In terms of biological role, divisome-localized glycosyl hydrolase that cleaves peptide-free (denuded) peptidoglycans. This Escherichia coli O157:H7 protein is Glycosyl hydrolase DigH.